The sequence spans 188 residues: Protein TIFY 9 (188 aa).

Residues 20 to 41 (DADDRHAKSGGSSASSSSSIRG) form a disordered region. The span at 28 to 38 (SGGSSASSSSS) shows a compositional bias: low complexity. The 35-residue stretch at 80–114 (AAAAAAPMTLFYNGSVAVFDVSHDKAEAIMRMATE) folds into the Tify domain. A Jas motif is present at residues 135 to 160 (PLTRTKSLQRFLSKRKERLTSLGPYQ). A disordered region spans residues 156–188 (LGPYQVGGPAAVGATTSTTTKSFLAKEEEHTAS). Residues 179-188 (LAKEEEHTAS) are compositionally biased toward basic and acidic residues.

The protein belongs to the TIFY/JAZ family. Interacts with COI1A and COI2 in a coronatine-dependent manner. Coronatine is an analog of jasmonoyl isoleucine (JA-Ile). Post-translationally, ubiquitinated. Targeted for degradation by the SCF(COI1) E3 ubiquitin ligase-proteasome pathway during jasmonate signaling.

Its function is as follows. Repressor of jasmonate responses. This is Protein TIFY 9 from Oryza sativa subsp. japonica (Rice).